Here is a 181-residue protein sequence, read N- to C-terminus: HGPRTase-like protein 2 (181 aa).

The protein belongs to the purine/pyrimidine phosphoribosyltransferase family. Archaeal HPRT subfamily.

May catalyze a purine salvage reaction, the substrate is unknown. This chain is HGPRTase-like protein 2, found in Haloterrigena turkmenica (strain ATCC 51198 / DSM 5511 / JCM 9101 / NCIMB 13204 / VKM B-1734 / 4k) (Halococcus turkmenicus).